The primary structure comprises 191 residues: Potassium-transporting ATPase KdpC subunit (191 aa).

Residues 7 to 27 (ASLVLFLSLTLLTGVAYPLLV) form a helical membrane-spanning segment.

Belongs to the KdpC family. As to quaternary structure, the system is composed of three essential subunits: KdpA, KdpB and KdpC.

It is found in the cell inner membrane. Its function is as follows. Part of the high-affinity ATP-driven potassium transport (or Kdp) system, which catalyzes the hydrolysis of ATP coupled with the electrogenic transport of potassium into the cytoplasm. This subunit acts as a catalytic chaperone that increases the ATP-binding affinity of the ATP-hydrolyzing subunit KdpB by the formation of a transient KdpB/KdpC/ATP ternary complex. The sequence is that of Potassium-transporting ATPase KdpC subunit from Methylibium petroleiphilum (strain ATCC BAA-1232 / LMG 22953 / PM1).